We begin with the raw amino-acid sequence, 77 residues long: Large ribosomal subunit protein bL28 (77 aa).

It belongs to the bacterial ribosomal protein bL28 family.

This Laribacter hongkongensis (strain HLHK9) protein is Large ribosomal subunit protein bL28.